Reading from the N-terminus, the 778-residue chain is Double zinc ribbon and ankyrin repeat-containing protein 1 (778 aa).

Ser-179 and Ser-201 each carry phosphoserine. 2 consecutive DZANK-type zinc fingers follow at residues 230–289 and 359–407; these read CAHC…CVVC and CSRC…GSCG. 2 ANK repeats span residues 631–662 and 666–695; these read ENKL…DPNC and QGRP…DIDQ. Ser-768 is subject to Phosphoserine.

As to quaternary structure, interacts with NINL. Associates with DYNC1H1 and multiple dynein intermediate and light chains as well as actin-binding proteins.

Its subcellular location is the cytoplasm. It localises to the cytoskeleton. The protein resides in the microtubule organizing center. The protein localises to the centrosome. It is found in the cilium basal body. Involved in vesicle transport in photoreceptor cells. This chain is Double zinc ribbon and ankyrin repeat-containing protein 1 (Dzank1), found in Mus musculus (Mouse).